The primary structure comprises 322 residues: Succinate/fumarate mitochondrial transporter (322 aa).

Solcar repeat units lie at residues 8–99 (SHPA…YRTL), 111–202 (GNTF…LKEF), and 212–303 (LPSW…VREH). 6 consecutive transmembrane segments (helical) span residues 11–31 (AINL…CHPL), 68–88 (FLAL…KMAI), 114–134 (FVAG…PMEV), 177–193 (GVSL…GANF), 219–235 (CIGL…NAPL), and 278–295 (GITP…VTFT).

The protein belongs to the mitochondrial carrier (TC 2.A.29) family.

It localises to the mitochondrion inner membrane. Its function is as follows. Transports cytoplasmic succinate, derived from isocitrate by the action of isocitrate lyase in the cytosol, into the mitochondrial matrix in exchange for fumarate. The protein is Succinate/fumarate mitochondrial transporter (SFC1) of Saccharomyces cerevisiae (strain ATCC 204508 / S288c) (Baker's yeast).